A 62-amino-acid chain; its full sequence is Large ribosomal subunit protein uL30 (62 aa).

The protein belongs to the universal ribosomal protein uL30 family. Part of the 50S ribosomal subunit.

In Hydrogenovibrio crunogenus (strain DSM 25203 / XCL-2) (Thiomicrospira crunogena), this protein is Large ribosomal subunit protein uL30.